Reading from the N-terminus, the 204-residue chain is Protein OPG030 (204 aa).

The BACK domain occupies 95 to 177 (FLRQYINNNI…ITYSELTNAI (83 aa)).

Belongs to the orthopoxvirus OPG030 family.

The protein is Protein OPG030 (OPG30) of Homo sapiens (Human).